The sequence spans 359 residues: Chorismate synthase (359 aa).

Positions 48 and 54 each coordinate NADP(+). Residues 125–127 (RSS), 243–244 (NA), Gly-283, 298–302 (KPTSS), and Arg-324 contribute to the FMN site.

This sequence belongs to the chorismate synthase family. In terms of assembly, homotetramer. Requires FMNH2 as cofactor.

It carries out the reaction 5-O-(1-carboxyvinyl)-3-phosphoshikimate = chorismate + phosphate. Its pathway is metabolic intermediate biosynthesis; chorismate biosynthesis; chorismate from D-erythrose 4-phosphate and phosphoenolpyruvate: step 7/7. Catalyzes the anti-1,4-elimination of the C-3 phosphate and the C-6 proR hydrogen from 5-enolpyruvylshikimate-3-phosphate (EPSP) to yield chorismate, which is the branch point compound that serves as the starting substrate for the three terminal pathways of aromatic amino acid biosynthesis. This reaction introduces a second double bond into the aromatic ring system. The protein is Chorismate synthase of Mannheimia succiniciproducens (strain KCTC 0769BP / MBEL55E).